The following is a 188-amino-acid chain: dCTP deaminase (188 aa).

DCTP is bound by residues 111 to 116, 135 to 137, Gln156, Tyr170, Lys179, and Gln180; these read KSTYAR and TLE. Catalysis depends on Glu137, which acts as the Proton donor/acceptor.

The protein belongs to the dCTP deaminase family. Homotrimer.

The catalysed reaction is dCTP + H2O + H(+) = dUTP + NH4(+). It functions in the pathway pyrimidine metabolism; dUMP biosynthesis; dUMP from dCTP (dUTP route): step 1/2. Its function is as follows. Catalyzes the deamination of dCTP to dUTP. In Rickettsia bellii (strain OSU 85-389), this protein is dCTP deaminase.